Reading from the N-terminus, the 856-residue chain is Envelope glycoprotein GP350 (856 aa).

Topologically, residues 1–809 (MEAALLVCQY…TSQPRFSNLS (809 aa)) are virion surface. 27 N-linked (GlcNAc...) asparagine; by host glycosylation sites follow: Asn-47, Asn-87, Asn-114, Asn-166, Asn-169, Asn-195, Asn-229, Asn-277, Asn-318, Asn-328, Asn-345, Asn-356, Asn-378, Asn-386, Asn-411, Asn-435, Asn-443, Asn-457, Asn-497, Asn-519, Asn-533, Asn-554, Asn-568, Asn-582, Asn-585, Asn-603, and Asn-614. A disordered region spans residues 421–779 (FSKAPESTTT…PPSTSSELRP (359 aa)). Over residues 427 to 437 (STTTSPTSNTT) the composition is skewed to low complexity. Positions 442 to 488 (PNTTTGLPSSTHVPTNLTAPASTGPTVSTADVTSPTPAGTTSGASPV) are enriched in polar residues. Residues 507–570 (TSPTPAVTTP…AVTTPTPNAT (64 aa)) are compositionally biased toward low complexity. Residues 575-616 (GETSPQANTTNHTLGGTSSTPVVTSQPKNATSAVTTGQHNIT) show a composition bias toward polar residues. Residues 617–631 (SSSTSSMSLRPSSIS) are compositionally biased toward low complexity. Residue Asn-650 is glycosylated (N-linked (GlcNAc...) asparagine; by host). Positions 654 to 669 (VTPASTSTHHVSTSSP) are enriched in low complexity. Residues 674–690 (GTTSQASGPGNSSTSTK) are compositionally biased toward polar residues. N-linked (GlcNAc...) asparagine; by host glycosylation is found at Asn-684, Asn-695, Asn-704, and Asn-729. A compositionally biased stretch (polar residues) spans 703 to 730 (KNATSPQAPSGQKTAVPTVTSTGGKANS). The span at 731 to 741 (TTGGKHTTGHG) shows a compositional bias: low complexity. Polar residues predominate over residues 743–776 (RTSTEPTTDYGGDSTTPRTRYNATTYLPPSTSSE). N-linked (GlcNAc...) asparagine; by host glycosylation is found at Asn-764 and Asn-807. Residues 810 to 830 (MLVLQWASLAVLTLLLLLVMA) form a helical membrane-spanning segment. Over 831 to 856 (DCAFRRNLSTSHTYTTPPYDDAETYV) the chain is Intravirion.

This sequence belongs to the Epstein-Barr GP350 family. As to quaternary structure, interacts with host CR2. In terms of processing, extensively glycosylated.

The protein resides in the virion membrane. The protein localises to the host membrane. Its function is as follows. Initiates virion attachment to host B-lymphocyte cell, leading to virus entry. Acts by binding to host CR2 at the surface of B-lymphocytes, facilitating the binding of viral glycoprotein gp42 to HLA class II molecules. Attachment triggers virion-host membrane fusion and invasion of the host cell. The chain is Envelope glycoprotein GP350 from Homo sapiens (Human).